Reading from the N-terminus, the 247-residue chain is Osmotin-like protein OSML81 (247 aa).

Residues 1 to 21 (MGYLRSSFIFSLLAFVTYTYA) form the signal peptide. Cystine bridges form between cysteine 30–cysteine 225, cysteine 72–cysteine 82, cysteine 87–cysteine 93, cysteine 141–cysteine 213, cysteine 146–cysteine 196, cysteine 154–cysteine 164, cysteine 168–cysteine 177, and cysteine 178–cysteine 183.

This sequence belongs to the thaumatin family.

This is Osmotin-like protein OSML81 from Solanum commersonii (Commerson's wild potato).